The primary structure comprises 492 residues: Transmembrane protein 39B (492 aa).

Positions 1 to 54 are disordered; that stretch reads MGGRRGPNRTSYCRNPLCEPGSSGGSSGSHTSSASVTSVRSRTRSSSGTGLSSP. N-linked (GlcNAc...) asparagine glycosylation occurs at Asn-8. Positions 28–53 are enriched in low complexity; sequence GSHTSSASVTSVRSRTRSSSGTGLSS. 8 helical membrane passes run 77–97, 115–135, 153–175, 185–205, 288–308, 322–342, 421–441, and 447–467; these read SILF…VHYI, TSLN…IVLG, SLFR…GWSL, TYSF…IPFL, EVLV…VWFV, LFLL…LPAS, ILNI…YSLM, and HQTI…FKLL.

Belongs to the TMEM39 family.

It localises to the endoplasmic reticulum membrane. May protect the cells against DNA damage caused by exposure to the cold-warming stress and facilitates tissue damage repair during the recovery phase. The chain is Transmembrane protein 39B from Homo sapiens (Human).